The primary structure comprises 156 residues: Small ribosomal subunit protein uS7 (156 aa).

Belongs to the universal ribosomal protein uS7 family. As to quaternary structure, part of the 30S ribosomal subunit. Contacts proteins S9 and S11.

Functionally, one of the primary rRNA binding proteins, it binds directly to 16S rRNA where it nucleates assembly of the head domain of the 30S subunit. Is located at the subunit interface close to the decoding center, probably blocks exit of the E-site tRNA. In Acetivibrio thermocellus (strain ATCC 27405 / DSM 1237 / JCM 9322 / NBRC 103400 / NCIMB 10682 / NRRL B-4536 / VPI 7372) (Clostridium thermocellum), this protein is Small ribosomal subunit protein uS7.